The sequence spans 263 residues: Purine nucleoside phosphorylase SAR1163 (263 aa).

Positions 79, 124, and 141 each coordinate Zn(2+).

The protein belongs to the purine nucleoside phosphorylase YfiH/LACC1 family. Homodimer. Cu(2+) is required as a cofactor. The cofactor is Zn(2+).

It carries out the reaction adenosine + phosphate = alpha-D-ribose 1-phosphate + adenine. The enzyme catalyses S-methyl-5'-thioadenosine + phosphate = 5-(methylsulfanyl)-alpha-D-ribose 1-phosphate + adenine. The catalysed reaction is inosine + phosphate = alpha-D-ribose 1-phosphate + hypoxanthine. It catalyses the reaction adenosine + H2O + H(+) = inosine + NH4(+). In terms of biological role, purine nucleoside enzyme that catalyzes the phosphorolysis of adenosine and inosine nucleosides, yielding D-ribose 1-phosphate and the respective free bases, adenine and hypoxanthine. Also catalyzes the phosphorolysis of S-methyl-5'-thioadenosine into adenine and S-methyl-5-thio-alpha-D-ribose 1-phosphate. Also has adenosine deaminase activity. The chain is Purine nucleoside phosphorylase SAR1163 from Staphylococcus aureus (strain MRSA252).